Here is a 357-residue protein sequence, read N- to C-terminus: Peptide chain release factor 1 (357 aa).

An N5-methylglutamine modification is found at Gln234. The segment covering Lys284–Arg307 has biased composition (basic and acidic residues). Residues Lys284–Gln313 are disordered.

It belongs to the prokaryotic/mitochondrial release factor family. Post-translationally, methylated by PrmC. Methylation increases the termination efficiency of RF1.

The protein localises to the cytoplasm. Its function is as follows. Peptide chain release factor 1 directs the termination of translation in response to the peptide chain termination codons UAG and UAA. The polypeptide is Peptide chain release factor 1 (Borrelia hermsii (strain HS1 / DAH)).